The following is a 373-amino-acid chain: MVSGGGVAAENGEMVGNGEGRKGAGASVLVTGGAGYIGTHTVLRLLEKGFAVTVVDNFHNSVPEALDRVRLIAGAALSARLDFIAGDLKSKDDMEKVFAAKRYDAVIHFAGLKAVGESVAHPQMYYENNVAGTMNLYSAMTKYGCKKIVFSSSATVYGQPEKTPCVEDSKLSALNPYGTTKLVLENYFRQVQAADPEMRVILLRYFNPIGAHRSGDIGEDPRGIPNNLLPYIQQVAVGRRPELNVYGVDYPTRDGTAIRDYIHVVDLADGHIAALEKLFATPDIGCVAYNLGTGCGTTVLEVVKAFEEASGKKIPIKICPRRPGDCTEVYASTDKAKKELGWSARFGIEDMCRDQWNWAKKNPYGYSANAEQN.

An NAD(+)-binding site is contributed by 27–58 (SVLVTGGAGYIGTHTVLRLLEKGFAVTVVDNF). Serine 153 contacts substrate. The Proton acceptor role is filled by tyrosine 177.

It belongs to the NAD(P)-dependent epimerase/dehydratase family. The cofactor is NAD(+).

The catalysed reaction is UDP-alpha-D-glucose = UDP-alpha-D-galactose. Its pathway is carbohydrate metabolism; galactose metabolism. In terms of biological role, catalyzes the interconversion between UDP-glucose and UDP-galactose. This Oryza sativa subsp. japonica (Rice) protein is UDP-glucose 4-epimerase 3 (UGE-3).